The primary structure comprises 430 residues: C4-dicarboxylate transport protein (430 aa).

Transmembrane regions (helical) follow at residues 9 to 29 (VLYVQVIFAIIVGVILGHFYP), 45 to 65 (LIKMVIGPIIFCTVVTGIAGM), 79 to 99 (LLYFEIVSTFALLLGLAATHL), 149 to 169 (GEILQILLIALLFGSVLAHLG), 185 to 205 (VLFGIVHIVTKLAPIGAFGAM), 223 to 243 (LIGTFYLTSVVFVLVVLGAIA), 308 to 328 (IYMTMAVLFIAQATNIELTWM), and 356 to 376 (AATLAVVPTIPLSGMVLILGI).

The protein belongs to the dicarboxylate/amino acid:cation symporter (DAACS) (TC 2.A.23) family.

It localises to the cell inner membrane. Functionally, responsible for the transport of dicarboxylates such as succinate, fumarate, and malate from the periplasm across the membrane. This Burkholderia orbicola (strain AU 1054) protein is C4-dicarboxylate transport protein.